The sequence spans 437 residues: Elongation factor 1-alpha (437 aa).

The tr-type G domain occupies 4–229 (KPHMNLVVIG…DQLQPPAKPV (226 aa)). The interval 13-20 (GHVDHGKS) is G1. 13 to 20 (GHVDHGKS) provides a ligand contact to GTP. Serine 20 is a binding site for Mg(2+). Residues 69–73 (GITID) form a G2 region. The interval 90 to 93 (DAPG) is G3. GTP contacts are provided by residues 90-94 (DAPGH) and 152-155 (NKMD). The tract at residues 152–155 (NKMD) is G4. The tract at residues 193-195 (SAW) is G5.

It belongs to the TRAFAC class translation factor GTPase superfamily. Classic translation factor GTPase family. EF-Tu/EF-1A subfamily.

It localises to the cytoplasm. The enzyme catalyses GTP + H2O = GDP + phosphate + H(+). In terms of biological role, GTP hydrolase that promotes the GTP-dependent binding of aminoacyl-tRNA to the A-site of ribosomes during protein biosynthesis. This Aeropyrum pernix (strain ATCC 700893 / DSM 11879 / JCM 9820 / NBRC 100138 / K1) protein is Elongation factor 1-alpha.